The primary structure comprises 264 residues: uncharacterized protein (264 aa).

2 disordered regions span residues 1 to 52 and 123 to 207; these read MPRS…AVPG and GGRW…PWTR. The segment covering 29-40 has biased composition (low complexity); that stretch reads AAHPTTSPTAAS. Residues 144-154 are compositionally biased toward polar residues; that stretch reads HFQSSGAQQES. Over residues 188 to 197 the composition is skewed to basic residues; sequence ARKSACKCPR.

This is an uncharacterized protein from Homo sapiens (Human).